Reading from the N-terminus, the 192-residue chain is MIMLTTSVAEAAHCLKQGQVLAYPTEAVWGLGCDPFNELAFRQILALKQRPIEKGVILLAGDVGQIEYLLADLDETIRAQVIESWTTRSVDERAITWLLPVSSDQVPTWITGQHHQVAVRVTNHPLCVALCHAFNGFIVSTSANPAGLEPARSLQEASAYFGQGLNYLNGDLGLSQQPSRIIDATTGRVIRD.

The 188-residue stretch at 5-192 (TTSVAEAAHC…DATTGRVIRD (188 aa)) folds into the YrdC-like domain.

Belongs to the SUA5 family. TsaC subfamily.

The protein localises to the cytoplasm. It carries out the reaction L-threonine + hydrogencarbonate + ATP = L-threonylcarbamoyladenylate + diphosphate + H2O. Its function is as follows. Required for the formation of a threonylcarbamoyl group on adenosine at position 37 (t(6)A37) in tRNAs that read codons beginning with adenine. Catalyzes the conversion of L-threonine, HCO(3)(-)/CO(2) and ATP to give threonylcarbamoyl-AMP (TC-AMP) as the acyladenylate intermediate, with the release of diphosphate. In Acinetobacter baylyi (strain ATCC 33305 / BD413 / ADP1), this protein is Threonylcarbamoyl-AMP synthase.